The sequence spans 468 residues: tRNA threonylcarbamoyladenosine dehydratase (468 aa).

A run of 3 helical transmembrane segments spans residues 15–35 (FWIAVSSSVTTACVILGTLEF), 109–129 (NSFVIVVGCGGVGSWVINMLA), and 315–335 (ILPVIGPMPGIFGLTIATYVL).

The protein belongs to the HesA/MoeB/ThiF family.

Its subcellular location is the mitochondrion outer membrane. Catalyzes the ATP-dependent dehydration of threonylcarbamoyladenosine at position 37 (t(6)A37) to form cyclic t(6)A37 (ct(6)A37) in tRNAs that read codons beginning with adenine. This is tRNA threonylcarbamoyladenosine dehydratase (tcd1) from Schizosaccharomyces pombe (strain 972 / ATCC 24843) (Fission yeast).